The primary structure comprises 277 residues: Probable endonuclease 4 (277 aa).

Residues histidine 67, histidine 107, glutamate 142, aspartate 176, histidine 179, histidine 211, aspartate 224, histidine 226, and glutamate 256 each contribute to the Zn(2+) site.

It belongs to the AP endonuclease 2 family. It depends on Zn(2+) as a cofactor.

It catalyses the reaction Endonucleolytic cleavage to 5'-phosphooligonucleotide end-products.. Endonuclease IV plays a role in DNA repair. It cleaves phosphodiester bonds at apurinic or apyrimidinic (AP) sites, generating a 3'-hydroxyl group and a 5'-terminal sugar phosphate. In Clostridium botulinum (strain Alaska E43 / Type E3), this protein is Probable endonuclease 4.